We begin with the raw amino-acid sequence, 368 residues long: UPF0284 protein PCC8801_3324 (368 aa).

This sequence belongs to the UPF0284 family.

The sequence is that of UPF0284 protein PCC8801_3324 from Rippkaea orientalis (strain PCC 8801 / RF-1) (Cyanothece sp. (strain PCC 8801)).